We begin with the raw amino-acid sequence, 239 residues long: Transcriptional regulatory protein DcuR (239 aa).

The region spanning 3 to 121 (NVLIIDDDAM…RFEEALTGWR (119 aa)) is the Response regulatory domain. 4-aspartylphosphate is present on D56. A DNA-binding region (H-T-H motif) is located at residues 181 to 200 (TDELANEVNISRVSCRKYLI).

In terms of processing, phosphorylated and activated by DcuS.

The protein resides in the cytoplasm. Its function is as follows. Member of the two-component regulatory system DcuR/DcuS. Involved in the C4-dicarboxylate-stimulated regulation of the genes encoding the anaerobic fumarate respiratory system (frdABCD; nuoAN; dcuB; dcuC; sdhCDAB; etc.). Weakly regulates the aerobic C4-dicarboxylate transporter dctA. The polypeptide is Transcriptional regulatory protein DcuR (dcuR) (Shigella flexneri).